Consider the following 323-residue polypeptide: Aldo-keto reductase family 1 member C3 (323 aa).

NADP(+) is bound by residues 20–24 and D50; that span reads GFGTY. Y55 (proton donor) is an active-site residue. H117 provides a ligand contact to substrate. NADP(+) contacts are provided by residues 166–167, Q190, 216–221, and 270–280; these read SN, YSALGS, and KSYNEQRIREN.

This sequence belongs to the aldo/keto reductase family.

It localises to the cytoplasm. It catalyses the reaction a 3alpha-hydroxysteroid + NADP(+) = a 3-oxosteroid + NADPH + H(+). It carries out the reaction a 3alpha-hydroxysteroid + NAD(+) = a 3-oxosteroid + NADH + H(+). The enzyme catalyses prostaglandin F2alpha + NADP(+) = prostaglandin D2 + NADPH + H(+). The catalysed reaction is testosterone + NAD(+) = androst-4-ene-3,17-dione + NADH + H(+). It catalyses the reaction testosterone + NADP(+) = androst-4-ene-3,17-dione + NADPH + H(+). It carries out the reaction prostaglandin F2alpha + NADP(+) = prostaglandin H2 + NADPH + H(+). The enzyme catalyses prostaglandin D2 + NADPH + H(+) = 11beta-prostaglandin F2 + NADP(+). The catalysed reaction is prostaglandin D2-ethanolamide + NADPH + H(+) = 11beta-prostaglandin F2-ethanolamide + NADP(+). It catalyses the reaction 17beta-estradiol + NADP(+) = estrone + NADPH + H(+). It carries out the reaction 17beta-estradiol + NAD(+) = estrone + NADH + H(+). The enzyme catalyses (20S)-hydroxypregn-4-en-3-one + NADP(+) = progesterone + NADPH + H(+). The catalysed reaction is (20S)-hydroxypregn-4-en-3-one + NAD(+) = progesterone + NADH + H(+). It catalyses the reaction 5alpha-androstane-3alpha,17beta-diol + NADP(+) = 17beta-hydroxy-5alpha-androstan-3-one + NADPH + H(+). It carries out the reaction 5alpha-androstane-3alpha,17beta-diol + NAD(+) = 17beta-hydroxy-5alpha-androstan-3-one + NADH + H(+). The enzyme catalyses androsterone + NADPH + H(+) = 5alpha-androstane-3alpha,17beta-diol + NADP(+). The catalysed reaction is 5alpha-androstane-3alpha,17beta-diol + NAD(+) = androsterone + NADH + H(+). It catalyses the reaction 5alpha-androstane-3beta,17beta-diol + NADP(+) = 17beta-hydroxy-5alpha-androstan-3-one + NADPH + H(+). It carries out the reaction 9-cis-retinol + NADP(+) = 9-cis-retinal + NADPH + H(+). It participates in steroid metabolism. Its function is as follows. Cytosolic aldo-keto reductase that catalyzes the NADH and NADPH-dependent reduction of ketosteroids to hydroxysteroids. Acts as a NAD(P)(H)-dependent 3-, 17- and 20-ketosteroid reductase on the steroid nucleus and side chain and regulates the metabolism of androgens, estrogens and progesterone. Displays the ability to catalyze both oxidation and reduction in vitro, but most probably acts as a reductase in vivo since the oxidase activity measured in vitro is inhibited by physiological concentration of NADPH. Acts preferentially as a 17-ketosteroid reductase and has the highest catalytic efficiency of the AKR1C enzyme for the reduction of delta4-androstenedione to form testosterone. Reduces prostaglandin (PG) D2 to 11beta-prostaglandin F2, progesterone to 20alpha-hydroxyprogesterone and estrone to 17beta-estradiol. Catalyzes the transformation of the potent androgen dihydrotestosterone (DHT) into the less active form, 5-alpha-androstan-3-alpha,17-beta-diol (3-alpha-diol). Also displays retinaldehyde reductase activity toward 9-cis-retinal. This chain is Aldo-keto reductase family 1 member C3 (AKR1C3), found in Pongo abelii (Sumatran orangutan).